A 372-amino-acid polypeptide reads, in one-letter code: L-selectin (372 aa).

Residues 1–28 (MIFPRKCQSTQRDLWNIFKLWGWTMLCC) form the signal peptide. The propeptide occupies 29-38 (DFLAHHGTDC). The Extracellular segment spans residues 39–332 (WTYHYSENPM…FSMIKEGDYN (294 aa)). In terms of domain architecture, C-type lectin spans 55–155 (RFCRENYTDL…ACHKPKAALC (101 aa)). Disulfide bonds link C57–C155, C128–C147, C128–C160, C160–C171, C165–C180, C182–C191, C197–C241, C227–C254, C259–C303, and C289–C316. Residues N60 and N104 are each glycosylated (N-linked (GlcNAc...) asparagine). Ca(2+)-binding residues include E118, N120, E126, N143, and D144. The EGF-like domain occupies 156–192 (YTASCQPWSCSGHGECVEIINNYTCNCDVGYYGPQCQ). N-linked (GlcNAc...) asparagine glycosylation is present at N177. 2 Sushi domains span residues 195-256 (IQCE…TCQV) and 257-318 (IQCE…ICQK). N-linked (GlcNAc...) asparagine glycosylation is found at N226, N232, N246, and N271. A helical transmembrane segment spans residues 333–355 (PLFIPVAVMVTAFSGLAFIIWLA). Topologically, residues 356–372 (RRLKKGKKSKKSMDDPY) are cytoplasmic.

The protein belongs to the selectin/LECAM family. In terms of assembly, interaction with SELPLG/PSGL1 and PODXL2 is required for promoting recruitment and rolling of leukocytes. This interaction is dependent on the sialyl Lewis X glycan modification of SELPLG and PODXL2, and tyrosine sulfation modifications of SELPLG. Sulfation on 'Tyr-51' of SELPLG is important for L-selectin binding. Post-translationally, N-glycosylated.

Its subcellular location is the cell membrane. In terms of biological role, calcium-dependent lectin that mediates cell adhesion by binding to glycoproteins on neighboring cells. Mediates the adherence of lymphocytes to endothelial cells of high endothelial venules in peripheral lymph nodes. Promotes initial tethering and rolling of leukocytes in endothelia. This is L-selectin (SELL) from Macaca mulatta (Rhesus macaque).